The sequence spans 94 residues: Co-chaperonin GroES (94 aa).

This sequence belongs to the GroES chaperonin family. Heptamer of 7 subunits arranged in a ring. Interacts with the chaperonin GroEL.

The protein resides in the cytoplasm. Functionally, together with the chaperonin GroEL, plays an essential role in assisting protein folding. The GroEL-GroES system forms a nano-cage that allows encapsulation of the non-native substrate proteins and provides a physical environment optimized to promote and accelerate protein folding. GroES binds to the apical surface of the GroEL ring, thereby capping the opening of the GroEL channel. The polypeptide is Co-chaperonin GroES (Staphylococcus aureus (strain Mu50 / ATCC 700699)).